A 371-amino-acid chain; its full sequence is O-antigen chain mannosyltransferase C (371 aa).

This sequence belongs to the glycosyltransferase group 1 family. Glycosyltransferase 4 subfamily.

It catalyses the reaction N-acetyl-alpha-D-glucosaminyl-di-trans,octa-cis-undecaprenyl diphosphate + GDP-alpha-D-mannose = alpha-D-mannosyl-(1-&gt;3)-N-acetyl-alpha-D-glucosaminyl-di-trans,octa-cis-undecaprenyl diphosphate + GDP + H(+). It participates in bacterial outer membrane biogenesis; LPS O-antigen biosynthesis. Its function is as follows. Mannosyltransferase involved in the biosynthesis of the repeat unit of the lipopolysaccharide (LPS) O-antigen region. Catalyzes the transfer of a single alpha-(1-&gt;3)-linked mannose residue to the acceptor N-acetyl-glucosaminyl-diphospho-undecaprenol during the synthesis of the adapter region. The polypeptide is O-antigen chain mannosyltransferase C (Escherichia coli).